A 434-amino-acid chain; its full sequence is Bestrophin homolog 12 (434 aa).

The next 4 membrane-spanning stretches (helical) occupy residues 31–51, 76–96, 244–264, and 278–298; these read KVILHEFLMTAGAYFGVFLVF, VCIPMQMMLAFFIATVADQWE, IPIPLAYPQAVFLAVRIYFFF, and WALSHWGFPLLTTLQFIFLVG.

Belongs to the anion channel-forming bestrophin (TC 1.A.46) family. Calcium-sensitive chloride channel subfamily. In terms of assembly, forms oligomers.

It is found in the cell membrane. Functionally, forms chloride channels. The sequence is that of Bestrophin homolog 12 (best-12) from Caenorhabditis elegans.